Here is a 900-residue protein sequence, read N- to C-terminus: 3'-5' exonuclease DinG (900 aa).

One can recognise an Exonuclease domain in the interval V8 to L161. Residues S241–R496 enclose the Helicase ATP-binding domain. An ATP-binding site is contributed by A276–S283. Positions D448–H451 match the DEAH box motif. The Helicase C-terminal domain occupies D713–Q893.

It belongs to the helicase family. DinG subfamily. Type 2 sub-subfamily.

Its function is as follows. 3'-5' exonuclease. The chain is 3'-5' exonuclease DinG from Staphylococcus haemolyticus (strain JCSC1435).